The following is a 345-amino-acid chain: MDENNGGSSSLPPFLTKTYEMVDDSSSDSVVAWSENNKSFIVKNPAEFSRDLLPRFFKHKNFSSFIRQLNTYGFRKVDPEKWEFLNDDFVRGRPYLMKNIHRRKPVHSHSLVNLQAQNPLTESERRSMEDQIERLKNEKEGLLAELQNQEQERKEFELQVTTLKDRLQHMEQHQKSIVAYVSQVLGKPGLSLNLENHERRKRRFQENSLPPSSSHIEQVEKLESSLTFWENLVSESCEKSGLQSSSMDHDAAESSLSIGDTRPKSSKIDMNSEPPVTVTAPAPKTGVNDDFWEQCLTENPGSTEQQEVQSERRDVGNDNNGNKIGNQRTYWWNSGNVNNITEKAS.

A DNA-binding region spans residues 11 to 105; the sequence is LPPFLTKTYE…LMKNIHRRKP (95 aa). The hydrophobic repeat HR-A/B stretch occupies residues 119-185; that stretch reads PLTESERRSM…SIVAYVSQVL (67 aa). Positions 199 to 203 match the Nuclear localization signal motif; the sequence is RRKRR. Residues 226-235 carry the AHA1 motif; the sequence is LTFWENLVSE. The interval 240–329 is disordered; that stretch reads SGLQSSSMDH…NGNKIGNQRT (90 aa). A compositionally biased stretch (low complexity) spans 274-283; the sequence is PPVTVTAPAP. Residues 289-298 carry the AHA2 motif; the sequence is DDFWEQCLTE. 2 stretches are compositionally biased toward polar residues: residues 296–308 and 317–329; these read LTEN…QQEV and NDNN…NQRT.

Belongs to the HSF family. Class A subfamily. In terms of assembly, homotrimer. Exhibits temperature-dependent phosphorylation. In terms of tissue distribution, expressed in roots, seedlings and at lower levels in leaves.

It localises to the nucleus. In terms of biological role, transcriptional activator that specifically binds DNA sequence 5'-AGAAnnTTCT-3' known as heat shock promoter elements (HSE). May be involved in general response to auxin. The chain is Heat stress transcription factor A-4c (HSFA4C) from Arabidopsis thaliana (Mouse-ear cress).